Here is a 186-residue protein sequence, read N- to C-terminus: Peptidyl-tRNA hydrolase (186 aa).

The Proton acceptor role is filled by His19. TRNA-binding residues include Phe64, Asn66, and Asn112.

It belongs to the PTH family. Monomer.

The protein localises to the cytoplasm. The enzyme catalyses an N-acyl-L-alpha-aminoacyl-tRNA + H2O = an N-acyl-L-amino acid + a tRNA + H(+). Functionally, hydrolyzes ribosome-free peptidyl-tRNAs (with 1 or more amino acids incorporated), which drop off the ribosome during protein synthesis, or as a result of ribosome stalling. Catalyzes the release of premature peptidyl moieties from peptidyl-tRNA molecules trapped in stalled 50S ribosomal subunits, and thus maintains levels of free tRNAs and 50S ribosomes. This is Peptidyl-tRNA hydrolase from Pelagibacter ubique (strain HTCC1062).